The following is a 236-amino-acid chain: Peptidase E (236 aa).

Active-site charge relay system residues include Ser122, Asp137, and His159.

It belongs to the peptidase S51 family.

It localises to the cytoplasm. The enzyme catalyses Dipeptidase E catalyzes the hydrolysis of dipeptides Asp-|-Xaa. It does not act on peptides with N-terminal Glu, Asn or Gln, nor does it cleave isoaspartyl peptides.. In terms of biological role, hydrolyzes dipeptides containing N-terminal aspartate residues. May play a role in allowing the cell to use peptide aspartate to spare carbon otherwise required for the synthesis of the aspartate family of amino acids. This chain is Peptidase E, found in Shewanella oneidensis (strain ATCC 700550 / JCM 31522 / CIP 106686 / LMG 19005 / NCIMB 14063 / MR-1).